Consider the following 662-residue polypeptide: MTKPPLLVTCGLPYTNGPCHLGHLRTYVPADCYVRYMRRTGEEVVFVSGSDNHGTPIVVSAEEQGTTPRALSEQYHRHFDETFRRMGVSFDHFGMTDDPACHHRTQDIVQRLVDNGYVYKQVVNQAYCPKCKRFLPDRYVEGICPYCGKQARGDECDQGCGKHLEPGEIKDPVCKICGTKAEFRNQEHYFLKLSAFRDYLLPFLDNLKGTSNARNYAIGWIKDELHDWCITRTLEWGVKFPGRDDLVVYVWVDAPIGYIAFTEEWAKENGRDWKRYWCKDNRVTHFIGGDIIYHHCIFWPGLLKGAGYGEPYAVVASGMVKVDDHKFSKSRGYVVWTNDDYLDKGLPADCLRYYLLAYTSHTKELNFSWKVFGERINNEVVNILGNFLYRTLFFAHKEFGGVPGGSVDPAILAEIEKCQKSVDDQMQAYEFKGAVDTVMGLAAFGNTYIQTNAPWKLIKTDRAAAAQVIKNGIQIAKALCLLIEPVMPVKAQECWAQLGYIDRVAAHRVDEGVVIVPERQIPAPAPLFARLEEKQIAELDAVLQQRVRDADKKTEKTPMISIEDFSKVEIKTGKVLAAESIPKSSKLLKLQVDIGGETRQIVSGIAAFYKPDELVGKDVIVLTNLAPAKIFGVESNGMILAAGDAASLLTPLKPVEPGTKIR.

Residues 13–23 (PYTNGPCHLGH) carry the 'HIGH' region motif. The Zn(2+) site is built by Cys-144, Cys-147, Cys-156, and Cys-160. Positions 326–330 (KFSKS) match the 'KMSKS' region motif. Lys-329 contacts ATP. The tRNA-binding domain occupies 564 to 662 (DFSKVEIKTG…KPVEPGTKIR (99 aa)).

Belongs to the class-I aminoacyl-tRNA synthetase family. MetG type 1 subfamily. In terms of assembly, homodimer. The cofactor is Zn(2+).

It is found in the cytoplasm. It carries out the reaction tRNA(Met) + L-methionine + ATP = L-methionyl-tRNA(Met) + AMP + diphosphate. Functionally, is required not only for elongation of protein synthesis but also for the initiation of all mRNA translation through initiator tRNA(fMet) aminoacylation. In Methanoregula boonei (strain DSM 21154 / JCM 14090 / 6A8), this protein is Methionine--tRNA ligase.